A 262-amino-acid polypeptide reads, in one-letter code: Acetaldehyde dehydrogenase 7 (262 aa).

10 to 13 contributes to the NAD(+) binding site; sequence SGNI. The active-site Acyl-thioester intermediate is the Cys-128. Position 159–167 (159–167) interacts with NAD(+); it reads SAGPGTRAN.

Belongs to the acetaldehyde dehydrogenase family.

The enzyme catalyses acetaldehyde + NAD(+) + CoA = acetyl-CoA + NADH + H(+). This Rhodococcus jostii (strain RHA1) protein is Acetaldehyde dehydrogenase 7.